The sequence spans 932 residues: MTTGFLQKIFGSRNQRLVKQYQKTVATINALETQIEKLTDDQLRGKTDEFRQRVAAGESLDKLLPEAFAVCREASRRVLKMRHFDVQMIGGMVLHYGKIAEMRTGEGKTLVATLPVYLNALAGRGVHVVTVNDYLAQRDAEWMARLYNFLGLSVGINLSGMEHDQKQQAYAADITYGTNNEFGFDYLRDNMVYETDARVQRALNFAVVDEVDSILIDEARTPLIISGQAEDHTELYVRMNALPPLLERQIGEEKADGTGVEKPGDYTLDEKARQVFLTESGHEKAERLLAEWGLIGEGESLYAPQNITLMHHVYAALRAHTLFHKDQHYVVQNGEVVIVDEFTGRLMAGRRWSDGLHQAVEAKEHVKIQSENQTLASITFQNYFRMYAKLAGMTGTADTEAYEFNEIYGLETVVIPTNRPPKRIDKQDQIYKTAKERYDAVIRDIRDCYERGQPVLVGTTSIENSELLSHLLKQVGLPHEVLNAKQHEREAAIVAEAGRPKRITIATNMAGRGTDIVLGGNAEKQAAFIEADDAIPADEKARRIQKLHDEWETLHEEVKAAGGLHIIGTERHESRRIDNQLRGRAGRQGDPGSSRFYLSLDDPLLRIFAGDRVRSIMDRLKMPEGEAIEAGIVTRSIESAQRKVEARNFDIRKQLLEYDDVSNDQRKVIYQQRNELLEAHDITETITAMRHGVITEVVRQFVPEGSIEEQWDVPELEEALRNDWQLDLAIQEMVNESSSITAEEILDAVMTAADEQYEAKVAMVGRESFSAFERSVMLQTVDRLWREHLAALDHLRQGIHLRGYAQKNPKQEYKREAFELFAAMLDAIKQEVTRIVMNVQIQSPEQLEEAAEQIEERGGHLENVEYQHADYADAGAPVANVTAAAAATATADMVGSAMTHSGPGGEMPKVGRNDPCPCGSGKKYKQCHGKLS.

Residues Gln-87, 105-109, and Asp-515 contribute to the ATP site; that span reads GEGKT. Positions 916, 918, 927, and 928 each coordinate Zn(2+).

It belongs to the SecA family. As to quaternary structure, monomer and homodimer. Part of the essential Sec protein translocation apparatus which comprises SecA, SecYEG and auxiliary proteins SecDF-YajC and YidC. It depends on Zn(2+) as a cofactor.

Its subcellular location is the cell inner membrane. The protein localises to the cytoplasm. It catalyses the reaction ATP + H2O + cellular proteinSide 1 = ADP + phosphate + cellular proteinSide 2.. Its function is as follows. Part of the Sec protein translocase complex. Interacts with the SecYEG preprotein conducting channel. Has a central role in coupling the hydrolysis of ATP to the transfer of proteins into and across the cell membrane, serving both as a receptor for the preprotein-SecB complex and as an ATP-driven molecular motor driving the stepwise translocation of polypeptide chains across the membrane. This chain is Protein translocase subunit SecA, found in Burkholderia orbicola (strain AU 1054).